The chain runs to 230 residues: Large ribosomal subunit protein uL1 (230 aa).

The protein belongs to the universal ribosomal protein uL1 family. In terms of assembly, part of the 50S ribosomal subunit.

In terms of biological role, binds directly to 23S rRNA. The L1 stalk is quite mobile in the ribosome, and is involved in E site tRNA release. Protein L1 is also a translational repressor protein, it controls the translation of the L11 operon by binding to its mRNA. This chain is Large ribosomal subunit protein uL1, found in Staphylococcus aureus (strain N315).